The chain runs to 269 residues: Probable sulfate transport system permease protein cysT (269 aa).

Transmembrane regions (helical) follow at residues 10–30 (SWRITLGYLLFMLILPILALL), 60–80 (MALIASIVNGIFGIFIAWILV), 92–112 (AAIDLPFALPTSVAGLTLATV), 130–150 (VVFTKLGVGVAMIFVSFPFVV), 179–199 (FWKVIFPSLIPSLLTGIALAF), 208–228 (SVVIIASNIPFKDLTAPVLIF), and 240–260 (TVIGTVILSISLFILVGINII). In terms of domain architecture, ABC transmembrane type-1 spans 54-255 (YSITLSMALI…ILSISLFILV (202 aa)).

Belongs to the binding-protein-dependent transport system permease family. CysTW subfamily.

It localises to the plastid. The protein localises to the chloroplast membrane. In terms of biological role, part of the ABC transporter complex cysAWTP (TC 3.A.1.6.1) involved in sulfate/thiosulfate import. Probably responsible for the translocation of the substrate across the membrane. This chain is Probable sulfate transport system permease protein cysT (cysT), found in Mesostigma viride (Green alga).